A 450-amino-acid chain; its full sequence is Bifunctional protein GlmU (450 aa).

The segment at 1–226 (MLAVAVLAAG…PDEVNGINNR (226 aa)) is pyrophosphorylase. Residues 7-10 (LAAG), lysine 21, glutamine 73, and 78-79 (GT) each bind UDP-N-acetyl-alpha-D-glucosamine. Aspartate 103 provides a ligand contact to Mg(2+). The UDP-N-acetyl-alpha-D-glucosamine site is built by glycine 140, glutamate 155, asparagine 170, and asparagine 224. Asparagine 224 contacts Mg(2+). The tract at residues 227 to 247 (KQLAQCEGVLQQRLRDYWMDE) is linker. The N-acetyltransferase stretch occupies residues 248 to 450 (GVTFVDPASC…TKDNWANRSI (203 aa)). 2 residues coordinate UDP-N-acetyl-alpha-D-glucosamine: arginine 329 and lysine 347. Histidine 359 (proton acceptor) is an active-site residue. Positions 362 and 373 each coordinate UDP-N-acetyl-alpha-D-glucosamine. Acetyl-CoA-binding positions include alanine 376, 382-383 (NY), alanine 419, and arginine 436.

This sequence in the N-terminal section; belongs to the N-acetylglucosamine-1-phosphate uridyltransferase family. The protein in the C-terminal section; belongs to the transferase hexapeptide repeat family. In terms of assembly, homotrimer. It depends on Mg(2+) as a cofactor.

The protein resides in the cytoplasm. The catalysed reaction is alpha-D-glucosamine 1-phosphate + acetyl-CoA = N-acetyl-alpha-D-glucosamine 1-phosphate + CoA + H(+). The enzyme catalyses N-acetyl-alpha-D-glucosamine 1-phosphate + UTP + H(+) = UDP-N-acetyl-alpha-D-glucosamine + diphosphate. The protein operates within nucleotide-sugar biosynthesis; UDP-N-acetyl-alpha-D-glucosamine biosynthesis; N-acetyl-alpha-D-glucosamine 1-phosphate from alpha-D-glucosamine 6-phosphate (route II): step 2/2. Its pathway is nucleotide-sugar biosynthesis; UDP-N-acetyl-alpha-D-glucosamine biosynthesis; UDP-N-acetyl-alpha-D-glucosamine from N-acetyl-alpha-D-glucosamine 1-phosphate: step 1/1. It functions in the pathway bacterial outer membrane biogenesis; LPS lipid A biosynthesis. Its function is as follows. Catalyzes the last two sequential reactions in the de novo biosynthetic pathway for UDP-N-acetylglucosamine (UDP-GlcNAc). The C-terminal domain catalyzes the transfer of acetyl group from acetyl coenzyme A to glucosamine-1-phosphate (GlcN-1-P) to produce N-acetylglucosamine-1-phosphate (GlcNAc-1-P), which is converted into UDP-GlcNAc by the transfer of uridine 5-monophosphate (from uridine 5-triphosphate), a reaction catalyzed by the N-terminal domain. In Synechococcus sp. (strain CC9902), this protein is Bifunctional protein GlmU.